A 164-amino-acid polypeptide reads, in one-letter code: NADH-quinone oxidoreductase subunit I (164 aa).

4Fe-4S ferredoxin-type domains follow at residues 55 to 85 and 95 to 124; these read LRRY…IDAE and TRYD…EGPN. Residues cysteine 65, cysteine 68, cysteine 71, cysteine 75, cysteine 104, cysteine 107, cysteine 110, and cysteine 114 each coordinate [4Fe-4S] cluster.

The protein belongs to the complex I 23 kDa subunit family. As to quaternary structure, NDH-1 is composed of 14 different subunits. Subunits NuoA, H, J, K, L, M, N constitute the membrane sector of the complex. [4Fe-4S] cluster is required as a cofactor.

It localises to the cell inner membrane. It catalyses the reaction a quinone + NADH + 5 H(+)(in) = a quinol + NAD(+) + 4 H(+)(out). Functionally, NDH-1 shuttles electrons from NADH, via FMN and iron-sulfur (Fe-S) centers, to quinones in the respiratory chain. The immediate electron acceptor for the enzyme in this species is believed to be ubiquinone. Couples the redox reaction to proton translocation (for every two electrons transferred, four hydrogen ions are translocated across the cytoplasmic membrane), and thus conserves the redox energy in a proton gradient. The polypeptide is NADH-quinone oxidoreductase subunit I (Ruegeria sp. (strain TM1040) (Silicibacter sp.)).